A 306-amino-acid polypeptide reads, in one-letter code: tRNA dimethylallyltransferase (306 aa).

13–20 (GPTGAGKT) contributes to the ATP binding site. 15–20 (TGAGKT) lines the substrate pocket. 2 interaction with substrate tRNA regions span residues 38-41 (DSRQ) and 161-165 (QRNAR).

Belongs to the IPP transferase family. In terms of assembly, monomer. Requires Mg(2+) as cofactor.

It carries out the reaction adenosine(37) in tRNA + dimethylallyl diphosphate = N(6)-dimethylallyladenosine(37) in tRNA + diphosphate. Functionally, catalyzes the transfer of a dimethylallyl group onto the adenine at position 37 in tRNAs that read codons beginning with uridine, leading to the formation of N6-(dimethylallyl)adenosine (i(6)A). This Maridesulfovibrio salexigens (strain ATCC 14822 / DSM 2638 / NCIMB 8403 / VKM B-1763) (Desulfovibrio salexigens) protein is tRNA dimethylallyltransferase.